The sequence spans 637 residues: Chaperone protein HtpG (637 aa).

The a; substrate-binding stretch occupies residues 1 to 345 (MSQQETHGFQ…SNDLPLNVSR (345 aa)). The interval 346–562 (EILQDNHITK…EGEMSTQMIK (217 aa)) is b. Residues 563–637 (LMQAAGQPVP…MNQMLLANLK (75 aa)) form a c region.

Belongs to the heat shock protein 90 family. In terms of assembly, homodimer.

The protein localises to the cytoplasm. Its function is as follows. Molecular chaperone. Has ATPase activity. The protein is Chaperone protein HtpG of Shewanella oneidensis (strain ATCC 700550 / JCM 31522 / CIP 106686 / LMG 19005 / NCIMB 14063 / MR-1).